We begin with the raw amino-acid sequence, 482 residues long: Protein trichome birefringence-like 15 (482 aa).

The helical; Signal-anchor for type II membrane protein transmembrane segment at 109-129 (GSVSLSLIILILLVTTLLVSA) threads the bilayer. Residues 217–219 (GDS) carry the GDS motif motif. The DCXHWCLPGXXDXWN motif motif lies at 461–475 (DCLHWCLPGIPDTWN).

It belongs to the PC-esterase family. TBL subfamily.

The protein resides in the membrane. Functionally, may act as a bridging protein that binds pectin and other cell wall polysaccharides. Probably involved in maintaining esterification of pectins. May be involved in the specific O-acetylation of cell wall polymers. This Arabidopsis thaliana (Mouse-ear cress) protein is Protein trichome birefringence-like 15 (TBL15).